Here is a 168-residue protein sequence, read N- to C-terminus: NADH-quinone oxidoreductase subunit B (168 aa).

C49, C50, C114, and C144 together coordinate [4Fe-4S] cluster.

The protein belongs to the complex I 20 kDa subunit family. In terms of assembly, NDH-1 is composed of 14 different subunits. Subunits NuoB, C, D, E, F, and G constitute the peripheral sector of the complex. [4Fe-4S] cluster is required as a cofactor.

The protein resides in the cell membrane. It carries out the reaction a quinone + NADH + 5 H(+)(in) = a quinol + NAD(+) + 4 H(+)(out). NDH-1 shuttles electrons from NADH, via FMN and iron-sulfur (Fe-S) centers, to quinones in the respiratory chain. Couples the redox reaction to proton translocation (for every two electrons transferred, four hydrogen ions are translocated across the cytoplasmic membrane), and thus conserves the redox energy in a proton gradient. The protein is NADH-quinone oxidoreductase subunit B of Wolbachia pipientis wMel.